A 169-amino-acid polypeptide reads, in one-letter code: Large ribosomal subunit protein uL10 (169 aa).

It belongs to the universal ribosomal protein uL10 family. Part of the ribosomal stalk of the 50S ribosomal subunit. The N-terminus interacts with L11 and the large rRNA to form the base of the stalk. The C-terminus forms an elongated spine to which L12 dimers bind in a sequential fashion forming a multimeric L10(L12)X complex.

Functionally, forms part of the ribosomal stalk, playing a central role in the interaction of the ribosome with GTP-bound translation factors. The polypeptide is Large ribosomal subunit protein uL10 (Rickettsia massiliae (strain Mtu5)).